We begin with the raw amino-acid sequence, 437 residues long: Probable receptor-like serine/threonine-protein kinase At4g34500 (437 aa).

Residues 25-45 traverse the membrane as a helical segment; the sequence is LVIAICSVFILLISLLIFLFV. The Protein kinase domain occupies 145–426; sequence FSDDNMIGEG…MLEAEDFPFR (282 aa). Residues 151-159 and Lys-173 each bind ATP; that span reads IGEGGYGVV. Position 220 is a phosphotyrosine (Tyr-220). The active-site Proton acceptor is the Asp-273. Phosphoserine is present on Ser-277. Phosphothreonine is present on residues Thr-307 and Thr-312. Tyr-320 carries the phosphotyrosine modification.

The protein belongs to the protein kinase superfamily. Ser/Thr protein kinase family.

It is found in the cell membrane. It carries out the reaction L-seryl-[protein] + ATP = O-phospho-L-seryl-[protein] + ADP + H(+). It catalyses the reaction L-threonyl-[protein] + ATP = O-phospho-L-threonyl-[protein] + ADP + H(+). This Arabidopsis thaliana (Mouse-ear cress) protein is Probable receptor-like serine/threonine-protein kinase At4g34500.